Consider the following 211-residue polypeptide: Dephospho-CoA kinase (211 aa).

The DPCK domain maps to 7 to 211 (LIGVIGRSGA…ILTRRGVLGE (205 aa)). Residue 15-20 (GAGKNV) participates in ATP binding.

It belongs to the CoaE family.

It localises to the cytoplasm. The catalysed reaction is 3'-dephospho-CoA + ATP = ADP + CoA + H(+). The protein operates within cofactor biosynthesis; coenzyme A biosynthesis; CoA from (R)-pantothenate: step 5/5. Its function is as follows. Catalyzes the phosphorylation of the 3'-hydroxyl group of dephosphocoenzyme A to form coenzyme A. This is Dephospho-CoA kinase from Treponema pallidum (strain Nichols).